We begin with the raw amino-acid sequence, 121 residues long: Small ribosomal subunit protein uS13 (121 aa).

Residues 94–121 form a disordered region; the sequence is GLPMRGQRTRTNARTRKGPRKGAAALKK.

The protein belongs to the universal ribosomal protein uS13 family. As to quaternary structure, part of the 30S ribosomal subunit. Forms a loose heterodimer with protein S19. Forms two bridges to the 50S subunit in the 70S ribosome.

Its function is as follows. Located at the top of the head of the 30S subunit, it contacts several helices of the 16S rRNA. In the 70S ribosome it contacts the 23S rRNA (bridge B1a) and protein L5 of the 50S subunit (bridge B1b), connecting the 2 subunits; these bridges are implicated in subunit movement. Contacts the tRNAs in the A and P-sites. The polypeptide is Small ribosomal subunit protein uS13 (Delftia acidovorans (strain DSM 14801 / SPH-1)).